A 610-amino-acid chain; its full sequence is Autophagy-related protein 22-1 (610 aa).

Pro residues predominate over residues 1-11 (MAFTPSSPPSP). Residues 1–29 (MAFTPSSPPSPAADASQRPSRYPGEDTTP) form a disordered region. The helical transmembrane segment at 35 to 55 (ILGWYAYGIAAEVFAVCGVGS) threads the bilayer. A glycan (N-linked (GlcNAc...) asparagine) is linked at asparagine 90. The next 3 membrane-spanning stretches (helical) occupy residues 120–140 (SFAM…LISF), 152–171 (TLLL…FVFV), and 189–209 (CLGS…ANDP). The disordered stretch occupies residues 229–265 (GQFEPRDSFSERNPEFESQYTPGIGLGSKPSTNATSP). The segment covering 232–243 (EPRDSFSERNPE) has biased composition (basic and acidic residues). N-linked (GlcNAc...) asparagine glycosylation is present at asparagine 261. 8 consecutive transmembrane segments (helical) span residues 278–298 (VGLG…LLFA), 310–330 (TLPL…FTMV), 384–404 (VFLV…GTAI), 418–438 (VGCL…LWPV), 453–473 (LCIA…IPLF), 488–510 (FPLA…SFFG), 522–544 (YALY…GMLI), and 553–573 (GFFF…MVNA). The interval 588 to 610 (AKGQESETGEPGEEAEGLLARGA) is disordered. Positions 594 to 603 (ETGEPGEEAE) are enriched in acidic residues.

This sequence belongs to the ATG22 family.

It localises to the vacuole membrane. Vacuolar effluxer which mediate the efflux of amino acids resulting from autophagic degradation. The release of autophagic amino acids allows the maintenance of protein synthesis and viability during nitrogen starvation. The sequence is that of Autophagy-related protein 22-1 (atg22-1) from Aspergillus terreus (strain NIH 2624 / FGSC A1156).